The sequence spans 387 residues: Proline-rich protein 5 (387 aa).

Interaction with RICTOR regions lie at residues 10 to 96 and 189 to 219; these read MSSP…LTKG and HESRGVTEDYLRLETLIQKVVSPYLGTYGLY. The disordered stretch occupies residues 11-33; that stretch reads SSPSLSDLGKREPGAAGADERGT. The segment covering 18 to 33 has biased composition (basic and acidic residues); it reads LGKREPGAAGADERGT. At Ser253 the chain carries Phosphoserine. 2 disordered regions span residues 262–347 and 365–387; these read NPVA…PETL and DFGRGSRSSVSDFEAAGGRPSVV. Residues 310–321 show a composition bias toward low complexity; the sequence is SSPSPHSGPCPS. At Ser373 the chain carries Phosphoserine.

The protein belongs to the PROTOR family. In terms of assembly, associated component of the mechanistic target of rapamycin complex 2 (mTORC2). Binds directly to MTOR and RICTOR within the TORC2 complex.

Its function is as follows. Associated subunit of mTORC2, which regulates cell growth and survival in response to hormonal signals. mTORC2 is activated by growth factors, but, in contrast to mTORC1, seems to be nutrient-insensitive. mTORC2 seems to function upstream of Rho GTPases to regulate the actin cytoskeleton, probably by activating one or more Rho-type guanine nucleotide exchange factors. PRR5 plays an important role in regulation of PDGFRB expression and in modulation of platelet-derived growth factor signaling. May act as a tumor suppressor in breast cancer. In Rattus norvegicus (Rat), this protein is Proline-rich protein 5.